We begin with the raw amino-acid sequence, 102 residues long: NADH-quinone oxidoreductase subunit K 1 (102 aa).

Helical transmembrane passes span 5 to 25 (LSHY…GIFL), 31 to 51 (IVIL…MVAF), and 65 to 85 (LFIL…LVVF).

This sequence belongs to the complex I subunit 4L family. As to quaternary structure, NDH-1 is composed of 14 different subunits. Subunits NuoA, H, J, K, L, M, N constitute the membrane sector of the complex.

The protein localises to the cell inner membrane. The catalysed reaction is a quinone + NADH + 5 H(+)(in) = a quinol + NAD(+) + 4 H(+)(out). NDH-1 shuttles electrons from NADH, via FMN and iron-sulfur (Fe-S) centers, to quinones in the respiratory chain. The immediate electron acceptor for the enzyme in this species is believed to be ubiquinone. Couples the redox reaction to proton translocation (for every two electrons transferred, four hydrogen ions are translocated across the cytoplasmic membrane), and thus conserves the redox energy in a proton gradient. The chain is NADH-quinone oxidoreductase subunit K 1 from Rhizobium etli (strain CIAT 652).